The primary structure comprises 383 residues: tRNA (guanine(26)-N(2))-dimethyltransferase (383 aa).

Residues 4 to 371 enclose the Trm1 methyltransferase domain; it reads EIITEGRTPL…ASPEEFEAVL (368 aa). S-adenosyl-L-methionine contacts are provided by R38, R63, D80, D108, and A109. Residues C243, C246, C258, and C261 each contribute to the Zn(2+) site.

The protein belongs to the class I-like SAM-binding methyltransferase superfamily. Trm1 family.

The enzyme catalyses guanosine(26) in tRNA + 2 S-adenosyl-L-methionine = N(2)-dimethylguanosine(26) in tRNA + 2 S-adenosyl-L-homocysteine + 2 H(+). Dimethylates a single guanine residue at position 26 of a number of tRNAs using S-adenosyl-L-methionine as donor of the methyl groups. In Methanopyrus kandleri (strain AV19 / DSM 6324 / JCM 9639 / NBRC 100938), this protein is tRNA (guanine(26)-N(2))-dimethyltransferase.